The following is a 385-amino-acid chain: Benzoylsuccinyl-CoA thiolase subunit BbsB (385 aa).

Arg-19 is a binding site for CoA. Cys-84 (acyl-thioester intermediate) is an active-site residue. CoA is bound by residues Gly-121, Arg-193, Cys-204, and Cys-205.

The protein belongs to the thiolase-like superfamily. Thiolase family. Heterotetramer composed of two BbsA subunits and two BbsB subunits. BbsB forms homodimeric subcomplexes. Both BbsA and BbsB are essential for enzymatic activity.

The catalysed reaction is (S)-2-benzoylsuccinyl-CoA + CoA = benzoyl-CoA + succinyl-CoA. It functions in the pathway xenobiotic degradation; toluene degradation. Functionally, component of the BbsAB thiolase complex, which catalyzes the thiolytic cleavage of (S)-2-benzoylsuccinyl-CoA to succinyl-CoA and benzoyl-CoA, the final step of anaerobic toluene metabolism. The chain is Benzoylsuccinyl-CoA thiolase subunit BbsB from Thauera aromatica.